The following is a 465-amino-acid chain: Iron-sulfur cluster assembly SufBD family protein SAUSA300_0822 (465 aa).

It belongs to the iron-sulfur cluster assembly SufBD family.

The polypeptide is Iron-sulfur cluster assembly SufBD family protein SAUSA300_0822 (Staphylococcus aureus (strain USA300)).